Here is a 385-residue protein sequence, read N- to C-terminus: MKFVDEVEIRVEAGDGGAGIVSFRREKYIPEGGPDGGDGGDGGSVYLQADENLNTLIDYQFERFHRADRGTNGRSRNCTGKKSDDLIIMVPVGTRIMDVDTQEGLGDLTQHGQKILVAKGGFHGLGNARFKSSTNRAPRQKTLGTEGEVRNLKLELLLLADVGLLGLPNAGKSTFIRSVSAAKPKVADYPFTTLIPNLGVVRPEANKSFVIADIPGLIEGASDGAGLGIQFLKHLERCRILLHIIDVMPVDGSNPVDNAFAIVNELHQYSPKLAEKPRWLVFNKIDLLPADEAKALCEKIAQELGETENIYSISAINKSNTQPLIHDVMTLLESMPKEKFVETTDEEVEFKWDTYHQKAAKKSDDDDDWDEWNEDDYDVEVVYER.

Residues 1-159 (MKFVDEVEIR…RNLKLELLLL (159 aa)) form the Obg domain. One can recognise an OBG-type G domain in the interval 160–333 (ADVGLLGLPN…LIHDVMTLLE (174 aa)). GTP-binding positions include 166 to 173 (GLPNAGKS), 191 to 195 (FTTLI), 213 to 216 (DIPG), 283 to 286 (NKID), and 314 to 316 (SAI). Mg(2+) is bound by residues Ser-173 and Thr-193.

It belongs to the TRAFAC class OBG-HflX-like GTPase superfamily. OBG GTPase family. In terms of assembly, monomer. Mg(2+) serves as cofactor.

Its subcellular location is the cytoplasm. In terms of biological role, an essential GTPase which binds GTP, GDP and possibly (p)ppGpp with moderate affinity, with high nucleotide exchange rates and a fairly low GTP hydrolysis rate. Plays a role in control of the cell cycle, stress response, ribosome biogenesis and in those bacteria that undergo differentiation, in morphogenesis control. The sequence is that of GTPase Obg from Pseudoalteromonas translucida (strain TAC 125).